A 308-amino-acid polypeptide reads, in one-letter code: Putative protein TIC 214 N-terminal part (308 aa).

6 consecutive transmembrane segments (helical) span residues 18 to 38 (IINS…FSIG), 64 to 84 (FITG…HLAL), 87 to 107 (PHTI…WNNH), 124 to 144 (LSIQ…HFIL), 172 to 192 (VGWL…LSWI), and 215 to 235 (IFSI…PSPI). Positions 239 to 249 (KLKETSEMEER) are enriched in basic and acidic residues. The interval 239 to 308 (KLKETSEMEE…RDPSEWKGNI (70 aa)) is disordered. Over residues 250–262 (GESEEETDVEIET) the composition is skewed to acidic residues. Residues 264-273 (SETKETKQEQ) are compositionally biased toward basic and acidic residues. The segment covering 275–293 (GSTEEDPSLCSEEQEDPDK) has biased composition (acidic residues). Basic and acidic residues predominate over residues 294–308 (LDETGRDPSEWKGNI).

The protein belongs to the TIC214 family. As to quaternary structure, part of the Tic complex.

The protein localises to the plastid. It localises to the chloroplast inner membrane. Functionally, involved in protein precursor import into chloroplasts. May be part of an intermediate translocation complex acting as a protein-conducting channel at the inner envelope. The sequence is that of Putative protein TIC 214 N-terminal part from Piper cenocladum (Ant piper).